We begin with the raw amino-acid sequence, 642 residues long: Chaperone protein HtpG (642 aa).

The interval 1 to 350 (MATDTQKETL…SNDLSLNVSR (350 aa)) is a; substrate-binding. The interval 351-567 (EILQNDHAVD…EYDMGLQMRR (217 aa)) is b. A c region spans residues 568-642 (LLEQAGQKLP…MNKLIVQLSK (75 aa)).

Belongs to the heat shock protein 90 family. Homodimer.

The protein localises to the cytoplasm. Its function is as follows. Molecular chaperone. Has ATPase activity. The polypeptide is Chaperone protein HtpG (Marinomonas sp. (strain MWYL1)).